A 1040-amino-acid polypeptide reads, in one-letter code: DNA cross-link repair 1A protein (1040 aa).

The tract at residues 1 to 190 (MLEDISEEDI…RAGDHPFSSP (190 aa)) is nuclear localization region. The tract at residues 15 to 76 (SKRKPKRVDP…LGNAGCQTSV (62 aa)) is disordered. Positions 53 to 65 (RAAEAKEVKDHEV) are enriched in basic and acidic residues. The UBZ4-type zinc-finger motif lies at 119-149 (DGYCPNCQMPFSSLIGQTPRWHVFECLDSPP). Residues C122, C125, H140, and C144 each coordinate Zn(2+). Glycyl lysine isopeptide (Lys-Gly) (interchain with G-Cter in SUMO2) cross-links involve residues K202, K236, K269, K353, K361, K429, K488, K508, K517, K533, and K536. The tract at residues 396–614 (LPYDLACTGG…KSLSDLEFDA (219 aa)) is nuclear focus formation. Disordered stretches follow at residues 582–602 (GINLNPVPSPNQKRSSQCKRK) and 623–651 (SVELSSERSQRQKKRCRKSNSLQEGACQK). The residue at position 590 (S590) is a Phosphoserine. Glycyl lysine isopeptide (Lys-Gly) (interchain with G-Cter in SUMO2) cross-links involve residues K668, K670, and K674.

This sequence belongs to the DNA repair metallo-beta-lactamase (DRMBL) family. In terms of assembly, binds constitutively to TP53BP1. Binds CDC27, which is itself a component of the anaphase promoting complex (APC). Binds PIAS1. Expressed in brain, heart, kidney, liver, pancreas, placenta and skeletal muscle.

It is found in the nucleus. It carries out the reaction a beta-lactam + H2O = a substituted beta-amino acid. Beta-lactamase activity is inhibited by sulbactam. In terms of biological role, may be required for DNA interstrand cross-link repair. Also required for checkpoint mediated cell cycle arrest in early prophase in response to mitotic spindle poisons. Possesses beta-lactamase activity, catalyzing the hydrolysis of penicillin G and nitrocefin. Exhibits no activity towards other beta-lactam antibiotic classes including cephalosporins (cefotaxime) and carbapenems (imipenem). This is DNA cross-link repair 1A protein (DCLRE1A) from Homo sapiens (Human).